The primary structure comprises 510 residues: UDP-N-acetylmuramoyl-tripeptide--D-alanyl-D-alanine ligase (510 aa).

Position 136-142 (136-142 (GSSGKTS)) interacts with ATP.

Belongs to the MurCDEF family. MurF subfamily.

Its subcellular location is the cytoplasm. The enzyme catalyses D-alanyl-D-alanine + UDP-N-acetyl-alpha-D-muramoyl-L-alanyl-gamma-D-glutamyl-meso-2,6-diaminopimelate + ATP = UDP-N-acetyl-alpha-D-muramoyl-L-alanyl-gamma-D-glutamyl-meso-2,6-diaminopimeloyl-D-alanyl-D-alanine + ADP + phosphate + H(+). Its pathway is cell wall biogenesis; peptidoglycan biosynthesis. In terms of biological role, involved in cell wall formation. Catalyzes the final step in the synthesis of UDP-N-acetylmuramoyl-pentapeptide, the precursor of murein. In Mycobacterium bovis (strain ATCC BAA-935 / AF2122/97), this protein is UDP-N-acetylmuramoyl-tripeptide--D-alanyl-D-alanine ligase.